Consider the following 231-residue polypeptide: D-allulose-6-phosphate 3-epimerase (231 aa).

Position 6 (S6) interacts with substrate. A divalent metal cation contacts are provided by H30, D32, and H63. D32 functions as the Proton acceptor in the catalytic mechanism. Substrate is bound by residues H63, G140–G143, D173–S175, and G195–S197. D173 serves as a coordination point for a divalent metal cation. D173 (proton donor) is an active-site residue.

It belongs to the ribulose-phosphate 3-epimerase family. AlsE subfamily. Homohexamer. Trimer of dimers. It depends on Co(2+) as a cofactor. The cofactor is Mn(2+). Requires Zn(2+) as cofactor.

It carries out the reaction D-allulose 6-phosphate = keto-D-fructose 6-phosphate. It participates in carbohydrate degradation; D-allose degradation. Functionally, catalyzes the reversible epimerization of D-allulose 6-phosphate to D-fructose 6-phosphate. Can also catalyze with lower efficiency the reversible epimerization of D-ribulose 5-phosphate to D-xylulose 5-phosphate. The chain is D-allulose-6-phosphate 3-epimerase from Escherichia coli (strain K12).